We begin with the raw amino-acid sequence, 310 residues long: Low-salt glycan biosynthesis protein Agl12 (310 aa).

NAD(+) contacts are provided by residues 7–13, 32–35, and 58–59; these read GGAGFIG, DALT, and DI. Serine 82 is a substrate binding site. Threonine 97 lines the NAD(+) pocket. Substrate is bound by residues threonine 122 and 122 to 124; that span reads TDE. The active-site Proton donor is aspartate 123. Active-site proton acceptor residues include glutamate 124 and tyrosine 146. 146–150 lines the NAD(+) pocket; the sequence is YSATK. Asparagine 175 lines the substrate pocket. Residue asparagine 176 coordinates NAD(+). Substrate is bound by residues 185–186, 201–203, arginine 210, asparagine 245, and 269–272; these read KL, PVY, and RAGH.

The protein belongs to the NAD(P)-dependent epimerase/dehydratase family. dTDP-glucose dehydratase subfamily. Requires NAD(+) as cofactor.

Its pathway is protein modification; protein glycosylation. It participates in cell surface structure biogenesis; S-layer biogenesis. In terms of biological role, lyase involved in N-glycan biosynthetic pathway that takes place under low-salt conditions (1.75 M instead of 3.4 M). Participates in the formation of the tetrasaccharide present at 'Asn-532' of S-layer glycoprotein Csg, consisting of a sulfated hexose, 2 hexoses and rhamnose. Involved in the addition of final rhamnose (sugar 4) of the tetrasaccharide on the dolichol phosphate carrier. This Haloferax volcanii (strain ATCC 29605 / DSM 3757 / JCM 8879 / NBRC 14742 / NCIMB 2012 / VKM B-1768 / DS2) (Halobacterium volcanii) protein is Low-salt glycan biosynthesis protein Agl12 (agl12).